The sequence spans 206 residues: TPR repeat-containing protein YrrB (206 aa).

TPR repeat units lie at residues 1 to 23, 24 to 57, 59 to 91, 93 to 125, 127 to 159, and 160 to 193; these read MQEG…NKED, AIPY…DSSA, TAYY…GMEN, DLFY…NEND, EARF…DPGH, and ADAF…QPDH.

Monomer.

Could be an interacting mediator in the complex formation among RNA sulfuration components, RNA processing components, and aminoacyl-tRNA synthetases. The polypeptide is TPR repeat-containing protein YrrB (yrrB) (Bacillus subtilis (strain 168)).